A 316-amino-acid polypeptide reads, in one-letter code: METWQELKVTVKREGEELVSNLLIELGAQGVAIEDSMDYVGNVDRFGEIFPEVEQQEEIVVTAYYPDTVDVTVVEADLQARLAELTDFMDLGELKIGTTALAEEDWADNWKKYYEPARITHDLTIVPSWTDYEATAGEMIIKLDPGMAFGTGTHPTTKMSLFALEQVLRGGETVLDVGTGSGVLSIASSLLGAKEIFAYDLDDVAVRVAQENIELNPGMENIHVAAGDLLKGVEIEADVIVANILADILIHLIDDAYRLVKDEGYLIMSGIIKDKLDMVRQSAESAGFFLETHMVQGEWNTCVFKKTKDISGVIGG.

4 residues coordinate S-adenosyl-L-methionine: T157, G178, D200, and N243.

Belongs to the methyltransferase superfamily. PrmA family.

It is found in the cytoplasm. It carries out the reaction L-lysyl-[protein] + 3 S-adenosyl-L-methionine = N(6),N(6),N(6)-trimethyl-L-lysyl-[protein] + 3 S-adenosyl-L-homocysteine + 3 H(+). Functionally, methylates ribosomal protein L11. This is Ribosomal protein L11 methyltransferase from Streptococcus pneumoniae serotype 4 (strain ATCC BAA-334 / TIGR4).